The chain runs to 30 residues: Cyclotide hyen-K (30 aa).

The segment at residues 1 to 30 is a cross-link (cyclopeptide (Gly-Asn)); it reads GIPCGESCIFIPCITTVVGCSCSNKVCYDN. Cystine bridges form between Cys-4–Cys-20, Cys-8–Cys-22, and Cys-13–Cys-27.

Post-translationally, this is a cyclic peptide. In terms of tissue distribution, detected in seeds (at protein level).

In terms of biological role, probably participates in a plant defense mechanism. The polypeptide is Cyclotide hyen-K (Pigea enneasperma (Spade flower)).